Reading from the N-terminus, the 540-residue chain is Chaperonin GroEL (540 aa).

Residues 30-33 (TLGP), Lys-51, 87-91 (DGTTT), Gly-415, 479-481 (NAA), and Asp-495 each bind ATP.

It belongs to the chaperonin (HSP60) family. Forms a cylinder of 14 subunits composed of two heptameric rings stacked back-to-back. Interacts with the co-chaperonin GroES.

It localises to the cytoplasm. The enzyme catalyses ATP + H2O + a folded polypeptide = ADP + phosphate + an unfolded polypeptide.. Its function is as follows. Together with its co-chaperonin GroES, plays an essential role in assisting protein folding. The GroEL-GroES system forms a nano-cage that allows encapsulation of the non-native substrate proteins and provides a physical environment optimized to promote and accelerate protein folding. The polypeptide is Chaperonin GroEL (Pectobacterium carotovorum subsp. carotovorum (Erwinia carotovora subsp. carotovora)).